The chain runs to 151 residues: MNAYNKADSFSLESDSIKDVIHDYICWLSMTDEMRPSIGNVFKAMETFKIDAVRYYDGNIYELAKDINAMSFDGFIRSLQTIASKKDKLTVYGTMGLLSIVVDINKGCDISNIKFAAGIIILMEYIFDDTDMSHLKVALYRRIQRRDDVDR.

It belongs to the orthopoxvirus OPG029 family. In terms of assembly, interacts with host TANK, TBKBP1 and AZI2; these interactions prevent interferon production. Interacts with host STAT2.

Its function is as follows. Prevents establishment of cellular antiviral state by blocking virus-induced phosphorylation and activation of interferon regulatory factors 3/IRF3 and 7/IRF7, transcription factors critical for the induction of interferons alpha and beta. This blockage is produced through the inhibition of host TBK1, by binding host TBK1 adapter proteins TBKBP1 and AZI2, thereby producing a strong inhibition of the phosphorylation and activation of IRF3 and IRF7. Also acts as an inhibitor of the cellular response to type I IFN by interacting with host STAT2. Mechanistically, exerts its inhibitory effect after host ISGF3 complex (composed of STAT1, STAT2 and IRF9) binding to the interferon stimulated response element (ISRE). The protein is IFN signaling evasion protein OPG029 (OPG029) of Vaccinia virus (strain Western Reserve) (VACV).